A 274-amino-acid polypeptide reads, in one-letter code: MNPEHSPLGKATVYAAQYDASLLFPIPRAGAREQLGITSALPFFGTDIWNAYELSWLNARGKPQVAVATFYVPAESPNIVESKSFKLYLGSFAQSKFDSLDAVRDTLKRDVSAACGASVSVQLVSPHDFGKLQMEELDGLSLDRLDLDTDVYEPDPSLLSAAQDEAPVEETLVSDLLRSNCPVTGQPDWGSVQIHYVGPQIDHAGLLRYIISFRNHTGFHEQCVERIFLDILHACKPLKLAVYARYTRRGGLDINPFRTNYNQPMPDNARTARQ.

80–82 (VES) is a substrate binding site. An NADPH-binding site is contributed by 82-83 (SK). Cysteine 181 functions as the Thioimide intermediate in the catalytic mechanism. Catalysis depends on aspartate 188, which acts as the Proton donor. 220–221 (HE) is a substrate binding site. 249–250 (RG) is a binding site for NADPH.

Belongs to the GTP cyclohydrolase I family. QueF type 2 subfamily. In terms of assembly, homodimer.

The protein localises to the cytoplasm. It catalyses the reaction 7-aminomethyl-7-carbaguanine + 2 NADP(+) = 7-cyano-7-deazaguanine + 2 NADPH + 3 H(+). The protein operates within tRNA modification; tRNA-queuosine biosynthesis. In terms of biological role, catalyzes the NADPH-dependent reduction of 7-cyano-7-deazaguanine (preQ0) to 7-aminomethyl-7-deazaguanine (preQ1). The polypeptide is NADPH-dependent 7-cyano-7-deazaguanine reductase (Burkholderia ambifaria (strain ATCC BAA-244 / DSM 16087 / CCUG 44356 / LMG 19182 / AMMD) (Burkholderia cepacia (strain AMMD))).